Here is a 241-residue protein sequence, read N- to C-terminus: LexA repressor (241 aa).

Residues 41–61 (FREIGNAAGLKSPSSVKHQLQ) constitute a DNA-binding region (H-T-H motif). Active-site for autocatalytic cleavage activity residues include Ser165 and Lys202.

This sequence belongs to the peptidase S24 family. In terms of assembly, homodimer.

It carries out the reaction Hydrolysis of Ala-|-Gly bond in repressor LexA.. Functionally, represses a number of genes involved in the response to DNA damage (SOS response), including recA and lexA. In the presence of single-stranded DNA, RecA interacts with LexA causing an autocatalytic cleavage which disrupts the DNA-binding part of LexA, leading to derepression of the SOS regulon and eventually DNA repair. This is LexA repressor from Bifidobacterium longum (strain DJO10A).